Here is a 410-residue protein sequence, read N- to C-terminus: Lipid droplet-regulating VLDL assembly factor AUP1 (410 aa).

At methionine 1 the chain carries N-acetylmethionine. Residues 1–20 lie on the Cytoplasmic side of the membrane; that stretch reads MEPPPAPGPERLFDSHRLPS. The stretch at 21-41 is an intramembrane region; the sequence is DGFLLLALLLYAPVGLCLLVL. Residues 42–410 are Cytoplasmic-facing; that stretch reads RLFLGLHVFL…FRERQAQEAE (369 aa). The interval 258–295 is disordered; that stretch reads RLTPADKAEHMKRQRHPRLRPQSVQSSFPSPPSPSSDV. Serine 292 is subject to Phosphoserine. In terms of domain architecture, CUE spans 296–338; the sequence is QLTTLAHRVKEVLPHVPLNVIQRDLARTGCVDLTITNLLEGAV. A disordered region spans residues 344 to 369; the sequence is DVTEGSQSPPAPSAPKFPSSGLATPQ. A Phosphoserine modification is found at serine 363. Threonine 367 carries the phosphothreonine modification.

It belongs to the AUP1 family. In terms of assembly, identified in a complex that contains SEL1L, OS9, FAF2/UBXD8, UBE2J1/UBC6E and AUP1. Interacts with the cytoplasmic tail of ITGA2B, ITGA1, ITGA2, ITGA5, ITGAV and ITGAM. Interacts (via C-terminus) with UBE2G2; the interaction recruits UBE2G2 to lipid droplets. Interacts with ubiquitin ligases AMFR/gp78 and RNF139/TRC8; this promotes interaction of UBE2G2 with AMFR and RNF139. Interacts with apolipoprotein APOB. In terms of processing, monoubiquitinated and diubiquitinated. As to expression, ubiquitous.

It localises to the endoplasmic reticulum membrane. It is found in the lipid droplet. Functionally, plays a role in the translocation of terminally misfolded proteins from the endoplasmic reticulum lumen to the cytoplasm and their degradation by the proteasome. Plays a role in lipid droplet formation. Induces lipid droplet clustering. Recruits ubiquitin-conjugating enzyme UBE2G2 to lipid droplets which facilitates its interaction with ubiquitin ligases AMFR/gp78 and RNF139/TRC8, leading to sterol-induced ubiquitination of HMGCR and its subsequent proteasomal degradation. Also required for the degradation of INSIG1, SREBF1 and SREBF2. Plays a role in regulating assembly and secretion of very low density lipoprotein particles and stability of apolipoprotein APOB. In Mus musculus (Mouse), this protein is Lipid droplet-regulating VLDL assembly factor AUP1.